The sequence spans 339 residues: 4-hydroxythreonine-4-phosphate dehydrogenase (339 aa).

Residues His141 and Thr142 each coordinate substrate. Residues His171, His215, and His270 each contribute to the a divalent metal cation site. 3 residues coordinate substrate: Lys278, Asn287, and Arg296.

Belongs to the PdxA family. Homodimer. Requires Zn(2+) as cofactor. It depends on Mg(2+) as a cofactor. Co(2+) is required as a cofactor.

The protein resides in the cytoplasm. The catalysed reaction is 4-(phosphooxy)-L-threonine + NAD(+) = 3-amino-2-oxopropyl phosphate + CO2 + NADH. It functions in the pathway cofactor biosynthesis; pyridoxine 5'-phosphate biosynthesis; pyridoxine 5'-phosphate from D-erythrose 4-phosphate: step 4/5. Functionally, catalyzes the NAD(P)-dependent oxidation of 4-(phosphooxy)-L-threonine (HTP) into 2-amino-3-oxo-4-(phosphooxy)butyric acid which spontaneously decarboxylates to form 3-amino-2-oxopropyl phosphate (AHAP). This Geobacter metallireducens (strain ATCC 53774 / DSM 7210 / GS-15) protein is 4-hydroxythreonine-4-phosphate dehydrogenase.